The chain runs to 146 residues: MARLDTLKNKAEFDFVYRNAQRFFHKDFVLYMLKFSSIRESYPLRQQRIFQSIQSRNAKLHLGLSVSRKIGKAYMRNLIKRRIKAIAYENCADFKDVIFLIVVKEGIREMDFATLKNNLLASFIKMYNAKKTRNIRVLHQISHYAG.

This sequence belongs to the RnpA family. As to quaternary structure, consists of a catalytic RNA component (M1 or rnpB) and a protein subunit.

It carries out the reaction Endonucleolytic cleavage of RNA, removing 5'-extranucleotides from tRNA precursor.. In terms of biological role, RNaseP catalyzes the removal of the 5'-leader sequence from pre-tRNA to produce the mature 5'-terminus. It can also cleave other RNA substrates such as 4.5S RNA. The protein component plays an auxiliary but essential role in vivo by binding to the 5'-leader sequence and broadening the substrate specificity of the ribozyme. This chain is Ribonuclease P protein component, found in Helicobacter hepaticus (strain ATCC 51449 / 3B1).